We begin with the raw amino-acid sequence, 140 residues long: Transcription antitermination protein NusB (140 aa).

This sequence belongs to the NusB family.

Functionally, involved in transcription antitermination. Required for transcription of ribosomal RNA (rRNA) genes. Binds specifically to the boxA antiterminator sequence of the ribosomal RNA (rrn) operons. This Pseudothermotoga lettingae (strain ATCC BAA-301 / DSM 14385 / NBRC 107922 / TMO) (Thermotoga lettingae) protein is Transcription antitermination protein NusB.